A 211-amino-acid polypeptide reads, in one-letter code: Small ribosomal subunit protein uS3c (211 aa).

A KH type-2 domain is found at 39–109 (IREFAESRLP…NVALYVTKTQ (71 aa)).

This sequence belongs to the universal ribosomal protein uS3 family. As to quaternary structure, part of the 30S ribosomal subunit.

Its subcellular location is the plastid. The protein resides in the chloroplast. The protein is Small ribosomal subunit protein uS3c (rps3) of Ostreococcus tauri.